A 255-amino-acid chain; its full sequence is MRVVGLISGGKDSCFNMLQCVSAGHSIVALANLRPADHAASDELDSYMYQTVGHQAVDLIAEAMGLPLYRRTIEGSSVHIDREYSPTDGDEVEDLYQLLKHVKEEMHVDGVSVGAILSDYQRVRVENVCARLQLQPLAYLWRRDQAALLSEMISSGLHAILIKVAAFGLHPDKHLGKSLAEMELYLHELSEKYGVHICGEGGEYETFTLDCPLFKKKIIIDATETVIHSDDAFAPVGFLRFTKMHTEDKTEVRTL.

The protein belongs to the Diphthine--ammonia ligase family.

It catalyses the reaction diphthine-[translation elongation factor 2] + NH4(+) + ATP = diphthamide-[translation elongation factor 2] + AMP + diphosphate + H(+). The protein operates within protein modification; peptidyl-diphthamide biosynthesis. Its function is as follows. Amidase that catalyzes the last step of diphthamide biosynthesis using ammonium and ATP. Diphthamide biosynthesis consists in the conversion of an L-histidine residue in the translation elongation factor eEF-2 (EEF2) to diphthamide. The chain is Diphthine--ammonia ligase (dph6) from Danio rerio (Zebrafish).